We begin with the raw amino-acid sequence, 108 residues long: Small ribosomal subunit protein uS17 (108 aa).

The protein belongs to the universal ribosomal protein uS17 family. Part of the 30S ribosomal subunit.

In terms of biological role, one of the primary rRNA binding proteins, it binds specifically to the 5'-end of 16S ribosomal RNA. The chain is Small ribosomal subunit protein uS17 from Methanospirillum hungatei JF-1 (strain ATCC 27890 / DSM 864 / NBRC 100397 / JF-1).